Reading from the N-terminus, the 241-residue chain is Phosphoribosylaminoimidazole-succinocarboxamide synthase (241 aa).

It belongs to the SAICAR synthetase family.

It carries out the reaction 5-amino-1-(5-phospho-D-ribosyl)imidazole-4-carboxylate + L-aspartate + ATP = (2S)-2-[5-amino-1-(5-phospho-beta-D-ribosyl)imidazole-4-carboxamido]succinate + ADP + phosphate + 2 H(+). It participates in purine metabolism; IMP biosynthesis via de novo pathway; 5-amino-1-(5-phospho-D-ribosyl)imidazole-4-carboxamide from 5-amino-1-(5-phospho-D-ribosyl)imidazole-4-carboxylate: step 1/2. The sequence is that of Phosphoribosylaminoimidazole-succinocarboxamide synthase (purC) from Bacillus subtilis (strain 168).